Consider the following 785-residue polypeptide: B-cell scaffold protein with ankyrin repeats (785 aa).

The interval methionine 1–isoleucine 154 is interaction with ITPR2. Residues asparagine 25–isoleucine 153 form the TIR domain. The region spanning valine 200–leucine 327 is the DBB domain. ANK repeat units lie at residues glutamate 342 to alanine 371 and glutamate 378 to isoleucine 408. 4 disordered regions span residues proline 433 to serine 480, glycine 493 to proline 514, glutamine 538 to tyrosine 578, and phenylalanine 606 to glutamate 625. Residues glutamate 553–glutamate 568 are compositionally biased toward basic and acidic residues. The segment covering lysine 569–tyrosine 578 has biased composition (acidic residues). The segment covering proline 611 to isoleucine 621 has biased composition (pro residues).

In terms of assembly, interacts with LYN, ITPR1 and ITPR2. Phosphorylated on tyrosines upon BCR activation. As to expression, expressed in B-cell but not T-cell or myeloid cell lines. Highest expression in CD19(+) B-cells, with very low expression in other cell populations.

Its function is as follows. Involved in B-cell receptor (BCR)-induced Ca(2+) mobilization from intracellular stores. Promotes Lyn-mediated phosphorylation of IP3 receptors 1 and 2. In Homo sapiens (Human), this protein is B-cell scaffold protein with ankyrin repeats (BANK1).